Reading from the N-terminus, the 670-residue chain is Serine/threonine-rich protein adg2 (670 aa).

A signal peptide spans 1–19 (MRRLTISGLLISLAKLCAG). Asparagine 77, asparagine 159, asparagine 204, asparagine 224, asparagine 274, asparagine 297, asparagine 327, asparagine 351, asparagine 370, asparagine 381, asparagine 405, asparagine 424, asparagine 435, asparagine 459, asparagine 478, asparagine 489, and asparagine 513 each carry an N-linked (GlcNAc...) asparagine glycan. Positions 526–651 (GSVSSFSSSP…MSLPPSAGSS (126 aa)) are disordered.

It localises to the secreted. Its subcellular location is the endoplasmic reticulum. This Schizosaccharomyces pombe (strain 972 / ATCC 24843) (Fission yeast) protein is Serine/threonine-rich protein adg2 (adg2).